The sequence spans 417 residues: Dihydroorotase (417 aa).

Positions 60 and 62 each coordinate Zn(2+). Substrate-binding positions include 62-64 (HLR) and asparagine 94. Zn(2+) contacts are provided by lysine 138, histidine 167, histidine 207, and aspartate 275. Lysine 138 bears the N6-carboxylysine mark. Aspartate 275 is an active-site residue. Residues histidine 279 and 289-290 (AG) each bind substrate.

This sequence belongs to the metallo-dependent hydrolases superfamily. DHOase family. Class I DHOase subfamily. Requires Zn(2+) as cofactor.

It catalyses the reaction (S)-dihydroorotate + H2O = N-carbamoyl-L-aspartate + H(+). Its pathway is pyrimidine metabolism; UMP biosynthesis via de novo pathway; (S)-dihydroorotate from bicarbonate: step 3/3. Its function is as follows. Catalyzes the reversible cyclization of carbamoyl aspartate to dihydroorotate. This chain is Dihydroorotase, found in Pyrococcus horikoshii (strain ATCC 700860 / DSM 12428 / JCM 9974 / NBRC 100139 / OT-3).